Consider the following 650-residue polypeptide: Threonine--tRNA ligase (650 aa).

The region spanning 3-65 (DLVKVTLPDG…ERDARLEIVT (63 aa)) is the TGS domain. The segment at 248–548 (DHRRLGPQLG…LVEHYAGAFP (301 aa)) is catalytic. The Zn(2+) site is built by Cys349, His400, and His525.

This sequence belongs to the class-II aminoacyl-tRNA synthetase family. Homodimer. The cofactor is Zn(2+).

It is found in the cytoplasm. The catalysed reaction is tRNA(Thr) + L-threonine + ATP = L-threonyl-tRNA(Thr) + AMP + diphosphate + H(+). In terms of biological role, catalyzes the attachment of threonine to tRNA(Thr) in a two-step reaction: L-threonine is first activated by ATP to form Thr-AMP and then transferred to the acceptor end of tRNA(Thr). Also edits incorrectly charged L-seryl-tRNA(Thr). This chain is Threonine--tRNA ligase, found in Anaeromyxobacter dehalogenans (strain 2CP-1 / ATCC BAA-258).